The primary structure comprises 657 residues: Glycogen debranching enzyme (657 aa).

Asp336 serves as the catalytic Nucleophile. Glu371 acts as the Proton donor in catalysis. Positions 460 to 479 are disordered; the sequence is ANGEENRDGTNNNYSNNHGK.

Belongs to the glycosyl hydrolase 13 family.

It catalyses the reaction Hydrolysis of (1-&gt;6)-alpha-D-glucosidic linkages to branches with degrees of polymerization of three or four glucose residues in limit dextrin.. It functions in the pathway glycan degradation; glycogen degradation. In terms of biological role, removes maltotriose and maltotetraose chains that are attached by 1,6-alpha-linkage to the limit dextrin main chain, generating a debranched limit dextrin. This chain is Glycogen debranching enzyme, found in Escherichia coli O9:H4 (strain HS).